Reading from the N-terminus, the 482-residue chain is Glutamyl-tRNA(Gln) amidotransferase subunit A (482 aa).

Active-site charge relay system residues include lysine 75 and serine 150. Serine 174 acts as the Acyl-ester intermediate in catalysis.

This sequence belongs to the amidase family. GatA subfamily. Heterotrimer of A, B and C subunits.

The enzyme catalyses L-glutamyl-tRNA(Gln) + L-glutamine + ATP + H2O = L-glutaminyl-tRNA(Gln) + L-glutamate + ADP + phosphate + H(+). Allows the formation of correctly charged Gln-tRNA(Gln) through the transamidation of misacylated Glu-tRNA(Gln) in organisms which lack glutaminyl-tRNA synthetase. The reaction takes place in the presence of glutamine and ATP through an activated gamma-phospho-Glu-tRNA(Gln). This is Glutamyl-tRNA(Gln) amidotransferase subunit A from Thermosynechococcus vestitus (strain NIES-2133 / IAM M-273 / BP-1).